A 72-amino-acid polypeptide reads, in one-letter code: Translation initiation factor IF-1 (72 aa).

One can recognise an S1-like domain in the interval methionine 1–arginine 72.

The protein belongs to the IF-1 family. Component of the 30S ribosomal translation pre-initiation complex which assembles on the 30S ribosome in the order IF-2 and IF-3, IF-1 and N-formylmethionyl-tRNA(fMet); mRNA recruitment can occur at any time during PIC assembly.

The protein localises to the cytoplasm. Its function is as follows. One of the essential components for the initiation of protein synthesis. Stabilizes the binding of IF-2 and IF-3 on the 30S subunit to which N-formylmethionyl-tRNA(fMet) subsequently binds. Helps modulate mRNA selection, yielding the 30S pre-initiation complex (PIC). Upon addition of the 50S ribosomal subunit IF-1, IF-2 and IF-3 are released leaving the mature 70S translation initiation complex. This Wigglesworthia glossinidia brevipalpis protein is Translation initiation factor IF-1.